We begin with the raw amino-acid sequence, 294 residues long: MFKGSIPALVTPFTAAGSVDADSFVAHVEWQIKEGSHGLVPVGTTGESPTLSHDEHKKVVELCVEASARRVPVIAGAGSNNTIEAIELAQHAEKAGADAILVVTPYYNKPTQKGLFAHFAAIAESVKLPIVIYNIPGRSVVDMSVETMAALAKAHPTIVGVKDATGRIERVSEQRMACGKAFVQLSGEDATALGFNAHGGVGCISVTANVAPRLCAEFQEATLAGNYAKALELQDKLMPLHKAIFLEPGVCGAKYALNRLGRMSFTVRSPLLSALEPATASAIDAALRHAGLMN.

T45 contributes to the pyruvate binding site. The Proton donor/acceptor role is filled by Y133. K162 serves as the catalytic Schiff-base intermediate with substrate. I204 contributes to the pyruvate binding site.

The protein belongs to the DapA family. As to quaternary structure, homotetramer; dimer of dimers.

It is found in the cytoplasm. It carries out the reaction L-aspartate 4-semialdehyde + pyruvate = (2S,4S)-4-hydroxy-2,3,4,5-tetrahydrodipicolinate + H2O + H(+). It functions in the pathway amino-acid biosynthesis; L-lysine biosynthesis via DAP pathway; (S)-tetrahydrodipicolinate from L-aspartate: step 3/4. In terms of biological role, catalyzes the condensation of (S)-aspartate-beta-semialdehyde [(S)-ASA] and pyruvate to 4-hydroxy-tetrahydrodipicolinate (HTPA). This is 4-hydroxy-tetrahydrodipicolinate synthase from Rhizobium meliloti (strain 1021) (Ensifer meliloti).